The following is a 336-amino-acid chain: DNA polymerase beta (336 aa).

Lysine 59, leucine 61, and valine 64 together coordinate K(+). Na(+)-binding residues include lysine 59, leucine 61, and valine 64. Residue lysine 71 is the Nucleophile; Schiff-base intermediate with DNA; for 5'-dRP lyase activity of the active site. At arginine 82 the chain carries Omega-N-methylarginine; by PRMT6. K(+)-binding residues include threonine 100, valine 102, and isoleucine 105. 3 residues coordinate Na(+): threonine 100, valine 102, and isoleucine 105. A 2'-deoxyribonucleoside 5'-triphosphate is bound at residue arginine 148. Omega-N-methylarginine; by PRMT6 is present on arginine 151. Positions 179, 182, 188, and 189 each coordinate a 2'-deoxyribonucleoside 5'-triphosphate. The DNA-binding stretch occupies residues 182–191; it reads RGAESSGDID. Mg(2+) is bound by residues aspartate 189, aspartate 191, and aspartate 257.

This sequence belongs to the DNA polymerase type-X family. The cofactor is Mg(2+). Post-translationally, methylation by PRMT6 stimulates the polymerase activity by enhancing DNA binding and processivity. Ubiquitinated: monoubiquitinated by huwe1/arf-bp1. Monoubiquitinated protein is then the target of stub1/chip, which catalyzes polyubiquitination from monoubiquitin, leading to degradation by the proteasome. usp47 mediates the deubiquitination of monoubiquitinated protein, preventing polyubiquitination by STUB1/CHIP and its subsequent degradation.

It is found in the nucleus. Its subcellular location is the cytoplasm. The enzyme catalyses DNA(n) + a 2'-deoxyribonucleoside 5'-triphosphate = DNA(n+1) + diphosphate. The catalysed reaction is a 5'-end 2'-deoxyribose-2'-deoxyribonucleotide-DNA = (2E,4S)-4-hydroxypenten-2-al-5-phosphate + a 5'-end 5'-phospho-2'-deoxyribonucleoside-DNA + H(+). It carries out the reaction 2'-deoxyribonucleotide-(2'-deoxyribose 5'-phosphate)-2'-deoxyribonucleotide-DNA = a 3'-end 2'-deoxyribonucleotide-(2,3-dehydro-2,3-deoxyribose 5'-phosphate)-DNA + a 5'-end 5'-phospho-2'-deoxyribonucleoside-DNA + H(+). Repair polymerase that plays a key role in base-excision repair. During this process, the damaged base is excised by specific DNA glycosylases, the DNA backbone is nicked at the abasic site by an apurinic/apyrimidic (AP) endonuclease, and POLB removes 5'-deoxyribose-phosphate from the preincised AP site acting as a 5'-deoxyribose-phosphate lyase (5'-dRP lyase); through its DNA polymerase activity, it adds one nucleotide to the 3' end of the arising single-nucleotide gap. Conducts 'gap-filling' DNA synthesis in a stepwise distributive fashion rather than in a processive fashion as for other DNA polymerases. It is also able to cleave sugar-phosphate bonds 3' to an intact AP site, acting as an AP lyase. This Danio rerio (Zebrafish) protein is DNA polymerase beta (polb).